A 589-amino-acid polypeptide reads, in one-letter code: MSSISLKENGGEVSVKKDYSNGGGVRDLYGEDSATEDHLITPWTFSVASGCSLLRDPRYNKGLAFTEGERDAHYLRGLLPPSVFNQELQEKRLMHNLRQYEVPLHRYMALMDLQERNERLFYKLLIDNVAELLPVVYTPTVGEACQKYGSIFRRPQGLYISLKEKGKILEVLKNWPEKSIQVIVVTDGERILGLGDLGCQGMGIPVGKLSLYTALGGVRPSSCLPVTIDVGTNNEKLLNDEFYIGLRQRRATGQEYATFLDEFMRAVKQNYGEKVLVQFEDFANHNAFDLLEKYSSSHLVFNDDIQGTASVVLAGLLASLKLVGGTLADHTFLFLGAGEAGTGIAELIAVEVSKQTKAPVEETRKKIWLVDSKGLIVSSRLESLQQFKKPWAHEHEPVKGLLEAVKAIKPTVLIGSSGAGKTFTKEVVETMASLNEKPLILALSNPTSQSECTAEEAYTWSKGRAIFASGSPFDPVEYEGKLFVPGQANNAYIFPGFGLGLIMSGAIRVRDEMLLAASEALAAQVSEENYDKGLIYPPFTNIRKISANIAAKVAAKAYDLGLASHLKRPKDLVKYAESCMYSPGYRSYR.

Y137 serves as the catalytic Proton donor. R190 contributes to the NAD(+) binding site. The Proton acceptor role is filled by K208. The a divalent metal cation site is built by E280, D281, and D304. D304 is a binding site for NAD(+). 333 to 349 (LFLGAGEAGTGIAELIA) contacts NADP(+). N445 contributes to the NAD(+) binding site.

The protein belongs to the malic enzymes family. As to quaternary structure, homotetramer. Mg(2+) serves as cofactor. Mn(2+) is required as a cofactor.

The protein localises to the cytoplasm. It catalyses the reaction (S)-malate + NADP(+) = pyruvate + CO2 + NADPH. It carries out the reaction oxaloacetate + H(+) = pyruvate + CO2. The chain is NADP-dependent malic enzyme (ME1) from Phaseolus vulgaris (Kidney bean).